The following is a 317-amino-acid chain: Ribonuclease Z (317 aa).

Residues histidine 61, histidine 63, aspartate 65, histidine 66, histidine 153, aspartate 221, and histidine 280 each contribute to the Zn(2+) site. Aspartate 65 functions as the Proton acceptor in the catalytic mechanism.

The protein belongs to the RNase Z family. In terms of assembly, homodimer. The cofactor is Zn(2+).

The catalysed reaction is Endonucleolytic cleavage of RNA, removing extra 3' nucleotides from tRNA precursor, generating 3' termini of tRNAs. A 3'-hydroxy group is left at the tRNA terminus and a 5'-phosphoryl group is left at the trailer molecule.. Functionally, zinc phosphodiesterase, which displays some tRNA 3'-processing endonuclease activity. Probably involved in tRNA maturation, by removing a 3'-trailer from precursor tRNA. The chain is Ribonuclease Z from Alkaliphilus oremlandii (strain OhILAs) (Clostridium oremlandii (strain OhILAs)).